A 377-amino-acid chain; its full sequence is GTP 3',8-cyclase (377 aa).

The disordered stretch occupies residues 1–29 (MTTRLYLSPTPPRNDREGASKSTSASIKH). One can recognise a Radical SAM core domain in the interval 45 to 271 (RFGRIARDLR…FTLSPAKEPR (227 aa)). Arg-54 contacts GTP. Residues Cys-61 and Cys-65 each coordinate [4Fe-4S] cluster. Tyr-67 is a binding site for S-adenosyl-L-methionine. Cys-68 contributes to the [4Fe-4S] cluster binding site. Arg-105 contributes to the GTP binding site. S-adenosyl-L-methionine is bound at residue Gly-109. Residue Thr-140 participates in GTP binding. An S-adenosyl-L-methionine-binding site is contributed by Ser-164. Lys-201 lines the GTP pocket. Residue Met-235 participates in S-adenosyl-L-methionine binding. Residues Cys-304 and Cys-307 each coordinate [4Fe-4S] cluster. 309 to 311 (RSR) provides a ligand contact to GTP. Cys-321 provides a ligand contact to [4Fe-4S] cluster.

The protein belongs to the radical SAM superfamily. MoaA family. Monomer and homodimer. Requires [4Fe-4S] cluster as cofactor.

It catalyses the reaction GTP + AH2 + S-adenosyl-L-methionine = (8S)-3',8-cyclo-7,8-dihydroguanosine 5'-triphosphate + 5'-deoxyadenosine + L-methionine + A + H(+). Its pathway is cofactor biosynthesis; molybdopterin biosynthesis. Functionally, catalyzes the cyclization of GTP to (8S)-3',8-cyclo-7,8-dihydroguanosine 5'-triphosphate. This chain is GTP 3',8-cyclase, found in Corynebacterium glutamicum (strain R).